Reading from the N-terminus, the 181-residue chain is Adenylate kinase (181 aa).

Residue 10–15 (GAGKGT) participates in ATP binding. The interval 30-59 (STGDLFRDNITNETELGVEAKRYLDAGDLV) is NMP. AMP contacts are provided by residues Thr31, Arg36, 57–59 (DLV), 85–88 (GYPR), and Gln92. Positions 126 to 132 (GRGRADD) are LID. Residue Arg127 coordinates ATP. Positions 129 and 140 each coordinate AMP. Gly166 serves as a coordination point for ATP.

This sequence belongs to the adenylate kinase family. Monomer.

The protein resides in the cytoplasm. It carries out the reaction AMP + ATP = 2 ADP. It participates in purine metabolism; AMP biosynthesis via salvage pathway; AMP from ADP: step 1/1. Functionally, catalyzes the reversible transfer of the terminal phosphate group between ATP and AMP. Plays an important role in cellular energy homeostasis and in adenine nucleotide metabolism. The chain is Adenylate kinase from Mycobacterium sp. (strain MCS).